Here is a 461-residue protein sequence, read N- to C-terminus: pre-mRNA splicing regulator USH1G (461 aa).

ANK repeat units follow at residues 31–60 (DGMTPTLWAAYHGNLESLRLIVSRGGDPDK), 64–93 (WGNTPLHLAASNGHLHCLSFLVSFGANIWC), and 97–126 (DYHTPLDMAAMKGHMECVRYLDSIAAKQSS). 2 disordered regions span residues 208-243 (GTARGKTKMQKKLERRKQGGEGTFKVSEDGRKSARS) and 332-368 (EDGGLDGVGAPRGRLQSSPSLDDDSLGSANSLQDRSC). Over residues 210 to 222 (ARGKTKMQKKLER) the composition is skewed to basic residues. The SAM domain maps to 385-447 (LEPETSPLET…KILGAVRRRR (63 aa)). Ser-422 carries the post-translational modification Phosphoserine; by CK2.

As to quaternary structure, part of a complex composed of USH1C, USH1G and MYO7A. Interacts with USH1C (via the first PDZ domain). Interacts with PDZD7. Interacts with CDH23 and PCDH15; these interactions may recruit USH1G to the plasma membrane. Interacts with intraflagellar transport proteins IFT20, IFT52 and IFT57. Interacts with splicing factors SF3B1, PRPF6, PRPF31 and SON. Interacts with the U4/U6.U5 tri-small nuclear ribonucleoprotein (tri-snRNP) complex in the presence of pre-mRNAs. Interacts (via SAM domain) with MAGI2 (via PDZ 6 domain); the interaction is triggered by phosphorylation of USH1G by CK2 and negatively regulates MAGI2-mediated endocytosis. As to expression, expressed in vestibule of the inner ear, eye and small intestine.

The protein localises to the cytoplasm. It is found in the cytosol. The protein resides in the cytoskeleton. It localises to the cell membrane. Its subcellular location is the cell projection. The protein localises to the cilium. It is found in the nucleus speckle. The protein resides in the nucleus. It localises to the cajal body. Its subcellular location is the microtubule organizing center. The protein localises to the centrosome. It is found in the photoreceptor inner segment. In terms of biological role, plays a role in pre-mRNA splicing by regulating the release and transfer of U4/U6.U5 tri-small nuclear ribonucleoprotein (tri-snRNP) complexes from their assembly site in Cajal bodies to nuclear speckles, thereby contributing to the assembly of the pre-catalytic spliceosome on target pre-mRNAs. May also participate in recycling of snRNPs back to Cajal bodies during splicing. Plays a role in regulating MAGI2-mediated endocytosis. Anchoring/scaffolding protein that is a part of the functional network formed by USH1C, USH1G, CDH23 and MYO7A that mediates mechanotransduction in cochlear hair cells. Required for normal development and maintenance of cochlear hair cell bundles. Required for normal hearing. The polypeptide is pre-mRNA splicing regulator USH1G (USH1G) (Homo sapiens (Human)).